The chain runs to 384 residues: MKRSHISSPRSYSRPAISIFGVFLLFLLVLTLSSRKPSDSSSGLAPNRNLATKSTIPRFAYLVTGTKGDGKRVKRLLKAIHHPRNYYLLHLDLEASDEERMELAKYVRSEKKKFENVMVMGLADLVTEKGPTMLASTLHGVAILLKKAKDWDWFINLSASDYPLMPQDDILHIFSYLPRYLNFIEHTSNIGWKENQRARPIIIDPGFYHLKKSGVFWAKERRSLPASFKLFMGSTSVALTRPFLEFCIWGWDNLPRTLLMYYTNFLLSSEGYFQTVVCNNKDYQNTTVNHDLHYTKWDPLQQRTLNVTVENFRDMVQSGAPFAREFREDDLVLDKIDIELLGQTDTGLELKTPDVVKPTVSWKRLEKLMVRLLDHENFRAKQCK.

The Cytoplasmic portion of the chain corresponds to 1–11 (MKRSHISSPRS). The chain crosses the membrane as a signal-anchor for type II membrane protein span at residues 12-34 (YSRPAISIFGVFLLFLLVLTLSS). The Lumenal segment spans residues 35 to 384 (RKPSDSSSGL…HENFRAKQCK (350 aa)). Residues asparagine 156, asparagine 285, and asparagine 306 are each glycosylated (N-linked (GlcNAc...) asparagine).

The protein belongs to the glycosyltransferase 14 family.

The protein resides in the golgi apparatus membrane. Its function is as follows. Beta-glucuronosyltransferase involved in the biosynthesis of type II arabinogalactan (AG). Modifies both the beta-1,6-linked galactan and beta-1,3-linked galactan present in type II AG. In Arabidopsis thaliana (Mouse-ear cress), this protein is Beta-glucuronosyltransferase GlcAT14C.